Consider the following 396-residue polypeptide: Elongation factor Tu (396 aa).

The tr-type G domain occupies 10–206 (KPHVNVGTIG…ALDTYIPTPE (197 aa)). The interval 19 to 26 (GHVDHGKT) is G1. Residue 19–26 (GHVDHGKT) participates in GTP binding. Position 26 (threonine 26) interacts with Mg(2+). The segment at 60–64 (GITIN) is G2. The G3 stretch occupies residues 81 to 84 (DCPG). GTP contacts are provided by residues 81-85 (DCPGH) and 136-139 (NKCD). Residues 136 to 139 (NKCD) are G4. Residues 174-176 (SAK) are G5.

The protein belongs to the TRAFAC class translation factor GTPase superfamily. Classic translation factor GTPase family. EF-Tu/EF-1A subfamily. As to quaternary structure, monomer.

Its subcellular location is the cytoplasm. The enzyme catalyses GTP + H2O = GDP + phosphate + H(+). Functionally, GTP hydrolase that promotes the GTP-dependent binding of aminoacyl-tRNA to the A-site of ribosomes during protein biosynthesis. This Cupriavidus pinatubonensis (strain JMP 134 / LMG 1197) (Cupriavidus necator (strain JMP 134)) protein is Elongation factor Tu.